Here is a 306-residue protein sequence, read N- to C-terminus: Aspartate carbamoyltransferase catalytic subunit (306 aa).

Arginine 56 and threonine 57 together coordinate carbamoyl phosphate. An L-aspartate-binding site is contributed by lysine 84. 3 residues coordinate carbamoyl phosphate: arginine 106, histidine 136, and glutamine 139. Arginine 169 and arginine 221 together coordinate L-aspartate. Carbamoyl phosphate is bound by residues alanine 262 and proline 263.

Belongs to the aspartate/ornithine carbamoyltransferase superfamily. ATCase family. Heterododecamer (2C3:3R2) of six catalytic PyrB chains organized as two trimers (C3), and six regulatory PyrI chains organized as three dimers (R2).

It carries out the reaction carbamoyl phosphate + L-aspartate = N-carbamoyl-L-aspartate + phosphate + H(+). Its pathway is pyrimidine metabolism; UMP biosynthesis via de novo pathway; (S)-dihydroorotate from bicarbonate: step 2/3. Functionally, catalyzes the condensation of carbamoyl phosphate and aspartate to form carbamoyl aspartate and inorganic phosphate, the committed step in the de novo pyrimidine nucleotide biosynthesis pathway. In Streptococcus gordonii (strain Challis / ATCC 35105 / BCRC 15272 / CH1 / DL1 / V288), this protein is Aspartate carbamoyltransferase catalytic subunit.